We begin with the raw amino-acid sequence, 530 residues long: Phosphoenolpyruvate carboxykinase (ATP) (530 aa).

Substrate-binding residues include Arg58, Tyr195, and Lys201. Residues Lys201, His220, and 236–244 (GLSGTGKTT) each bind ATP. Mn(2+) is bound by residues Lys201 and His220. Asp257 serves as a coordination point for Mn(2+). Residues Glu285, Arg321, 440–441 (RI), and Thr446 contribute to the ATP site. Residue Arg321 participates in substrate binding.

It belongs to the phosphoenolpyruvate carboxykinase (ATP) family. The cofactor is Mn(2+).

The protein localises to the cytoplasm. The catalysed reaction is oxaloacetate + ATP = phosphoenolpyruvate + ADP + CO2. It participates in carbohydrate biosynthesis; gluconeogenesis. Its function is as follows. Involved in the gluconeogenesis. Catalyzes the conversion of oxaloacetate (OAA) to phosphoenolpyruvate (PEP) through direct phosphoryl transfer between the nucleoside triphosphate and OAA. In Staphylococcus aureus (strain bovine RF122 / ET3-1), this protein is Phosphoenolpyruvate carboxykinase (ATP).